Here is a 567-residue protein sequence, read N- to C-terminus: uncharacterized protein (567 aa).

Helical transmembrane passes span F20–L40, S69–I89, A95–I115, I126–L146, I168–F188, and I528–I548.

The protein resides in the cell membrane. This is an uncharacterized protein from Escherichia coli (strain K12).